We begin with the raw amino-acid sequence, 277 residues long: Undecaprenyl-diphosphatase (277 aa).

Helical transmembrane passes span 44 to 64 (RAMA…VWEF), 86 to 106 (GNLL…ADLI), 110 to 130 (LFNP…MLWA), 184 to 204 (AATE…AVYS), 215 to 235 (GDLP…MIAV), and 250 to 270 (FAWY…FGWV).

This sequence belongs to the UppP family.

The protein resides in the cell inner membrane. The enzyme catalyses di-trans,octa-cis-undecaprenyl diphosphate + H2O = di-trans,octa-cis-undecaprenyl phosphate + phosphate + H(+). Catalyzes the dephosphorylation of undecaprenyl diphosphate (UPP). Confers resistance to bacitracin. The sequence is that of Undecaprenyl-diphosphatase from Pseudomonas putida (strain ATCC 47054 / DSM 6125 / CFBP 8728 / NCIMB 11950 / KT2440).